The primary structure comprises 169 residues: Myosin regulatory light chain 2, skeletal muscle isoform A (169 aa).

A Phosphoserine modification is found at Ser21. EF-hand domains follow at residues 26–61 (SQIQ…MGQL), 96–131 (DPED…QCDR), and 132–167 (FTAE…GEEK). The Ca(2+) site is built by Asp39, Asn41, Asp43, and Asp50.

Myosin is a hexamer of 2 heavy chains and 4 light chains. Interacts with nanos3; the interaction negatively regulates mylpfa phosphorylation.

Functionally, myosin regulatory subunit that plays a role to maintain muscle integrity during early development. Plays a role in muscle contraction. This Danio rerio (Zebrafish) protein is Myosin regulatory light chain 2, skeletal muscle isoform A (mylpfa).